A 223-amino-acid polypeptide reads, in one-letter code: Cytidylate kinase (223 aa).

13–21 (GPSASGKGT) contributes to the ATP binding site.

It belongs to the cytidylate kinase family. Type 1 subfamily.

The protein localises to the cytoplasm. It catalyses the reaction CMP + ATP = CDP + ADP. The catalysed reaction is dCMP + ATP = dCDP + ADP. The polypeptide is Cytidylate kinase (Nitrosomonas europaea (strain ATCC 19718 / CIP 103999 / KCTC 2705 / NBRC 14298)).